The primary structure comprises 274 residues: Nickel/cobalt efflux system RcnA (274 aa).

The Periplasmic segment spans residues methionine 1–asparagine 12. Residues alanine 13 to histidine 33 form a helical membrane-spanning segment. Topologically, residues serine 34 to glycine 56 are cytoplasmic. The chain crosses the membrane as a helical span at residues leucine 57–isoleucine 77. At serine 78–alanine 86 the chain is on the periplasmic side. A helical transmembrane segment spans residues glutamate 87–tryptophan 107. The Cytoplasmic portion of the chain corresponds to arginine 108 to glutamine 174. Positions histidine 127–histidine 153 are disordered. Residues histidine 129–histidine 144 show a composition bias toward basic residues. A helical transmembrane segment spans residues isoleucine 175 to leucine 195. Topologically, residues isoleucine 196–leucine 209 are periplasmic. Residues valine 210–isoleucine 230 form a helical membrane-spanning segment. The Cytoplasmic portion of the chain corresponds to serine 231–tyrosine 251. The chain crosses the membrane as a helical span at residues phenylalanine 252–isoleucine 272. The Periplasmic segment spans residues methionine 273–arginine 274.

This sequence belongs to the NiCoT transporter (TC 2.A.52) family. RcnA subfamily.

The protein localises to the cell inner membrane. Efflux system for nickel and cobalt. This is Nickel/cobalt efflux system RcnA (rcnA) from Escherichia coli O9:H4 (strain HS).